Here is a 79-residue protein sequence, read N- to C-terminus: Small ribosomal subunit protein bS18 (79 aa).

The protein belongs to the bacterial ribosomal protein bS18 family. In terms of assembly, part of the 30S ribosomal subunit. Forms a tight heterodimer with protein bS6.

Functionally, binds as a heterodimer with protein bS6 to the central domain of the 16S rRNA, where it helps stabilize the platform of the 30S subunit. The polypeptide is Small ribosomal subunit protein bS18 (Streptococcus pyogenes serotype M5 (strain Manfredo)).